The sequence spans 362 residues: MEQAVHGESKRGQVTGTHLTNDISKAKKCTVIGGSGFLGQHMVEQLLERGYTVNVFDIHQGFDNPRVQFFIGDLCNQQDLYPALKGVSTVFHCASPPPYSNNKELFYRVNFIGTKTVIETCREAGVQKLILTSSASVVFEGVDIKNGTEDLPYAMKPIDYYTETKILQERAVLDANDPKKNFLTAAIRPHGIFGPRDPQLVPILIDAARKGKMKFMIGNGENLVDFTFVENVVHGHILAAEHLSQDAALGGKAFHITNDEPIPFWTFLSRILTGLNYEAPKYHIPYWMAYYLAFLLSLLVMVVSPLIQIQPTFTPIRVALAGTFHYYSCEKAKKLFGYRPLVTMDEAVERTVQSFHHLRKDK.

An N-acetylmethionine modification is found at Met1. Residue Tyr161 is the Proton acceptor of the active site. Lys165 contacts NAD(+). Residues 287-307 (WMAYYLAFLLSLLVMVVSPLI) traverse the membrane as a helical segment. The short motif at 359 to 362 (RKDK) is the Prevents secretion from ER element.

Belongs to the 3-beta-HSD family. In terms of assembly, homodimer.

The protein resides in the endoplasmic reticulum membrane. The protein localises to the lipid droplet. The enzyme catalyses a 3beta-hydroxysteroid-4alpha-carboxylate + NADP(+) = a 3-oxosteroid + CO2 + NADPH. It carries out the reaction a 3beta-hydroxysteroid-4alpha-carboxylate + NAD(+) = a 3-oxosteroid + CO2 + NADH. It catalyses the reaction 4alpha-carboxyzymosterol + NADP(+) = zymosterone + CO2 + NADPH. The catalysed reaction is 4alpha-carboxy-4beta-methyl-5alpha-cholest-8-en-3beta-ol + NADP(+) = 4alpha-methyl-5alpha-cholest-8-en-3-one + CO2 + NADPH. The enzyme catalyses 4alpha-carboxy-5alpha-cholest-8-ene-3beta-ol + NADP(+) = 5alpha-cholest-8-en-3-one + CO2 + NADPH. It carries out the reaction 4beta-methylzymosterol-4alpha-carboxylate + NADP(+) = 3-dehydro-4-methylzymosterol + CO2 + NADPH. It catalyses the reaction 4beta-methylzymosterol-4alpha-carboxylate + NAD(+) = 3-dehydro-4-methylzymosterol + CO2 + NADH. The catalysed reaction is 4alpha-carboxy-5alpha-cholest-8-ene-3beta-ol + NAD(+) = 5alpha-cholest-8-en-3-one + CO2 + NADH. The enzyme catalyses 4alpha-carboxy-4beta-methyl-5alpha-cholest-8-en-3beta-ol + NAD(+) = 4alpha-methyl-5alpha-cholest-8-en-3-one + CO2 + NADH. It carries out the reaction 4alpha-carboxyzymosterol + NAD(+) = zymosterone + CO2 + NADH. Its pathway is steroid biosynthesis; zymosterol biosynthesis; zymosterol from lanosterol: step 4/6. Catalyzes the NAD(P)(+)-dependent oxidative decarboxylation of the C4 methyl groups of 4-alpha-carboxysterols in post-squalene cholesterol biosynthesis. Plays a role in the regulation of the endocytic trafficking of EGFR. The sequence is that of Sterol-4-alpha-carboxylate 3-dehydrogenase, decarboxylating (Nsdhl) from Mus musculus (Mouse).